The sequence spans 123 residues: Protein Wnt-7 (123 aa).

Residue S1 is the site of O-palmitoleoyl serine; by PORCN attachment. N79 and N90 each carry an N-linked (GlcNAc...) asparagine glycan. A disulfide bond links C89 and C104.

Belongs to the Wnt family. In terms of processing, palmitoleoylation is required for efficient binding to frizzled receptors. Depalmitoleoylation leads to Wnt signaling pathway inhibition.

The protein localises to the secreted. It is found in the extracellular space. The protein resides in the extracellular matrix. Functionally, ligand for members of the frizzled family of seven transmembrane receptors. Probable developmental protein. May be a signaling molecule which affects the development of discrete regions of tissues. Is likely to signal over only few cell diameters. The polypeptide is Protein Wnt-7 (WNT-7) (Strongylocentrotus purpuratus (Purple sea urchin)).